Consider the following 157-residue polypeptide: Ubiquitin-like protein 4A (157 aa).

The Ubiquitin-like domain maps to 1–76 (MQLTVKALQG…LNLVVKPLEK (76 aa)). Lys48 is covalently cross-linked (Glycyl lysine isopeptide (Lys-Gly) (interchain with G-Cter in ubiquitin)). At Ser90 the chain carries Phosphoserine. Residues 96–138 (WQLISKVLARHFSAADASRVLEQLQRDYERSLSRLTLDDIERL) form a required and sufficient for interaction with BAG6 region.

As to quaternary structure, component of the BAG6/BAT3 complex, at least composed of BAG6, UBL4A and GET4/TRC35. Interacts with BAG6; the interaction is direct and required for UBL4A protein stability. Interacts with USP13; may be indirect via BAG6. In terms of processing, polyubiquitinated. Ubiquitination by AMFR and deubiquitination by USP13 may regulate the interaction between the BAG6/BAT complex and SGTA and therefore may regulate client proteins fate.

It is found in the cytoplasm. Its subcellular location is the cytosol. The protein resides in the nucleus. Functionally, as part of a cytosolic protein quality control complex, the BAG6/BAT3 complex, maintains misfolded and hydrophobic patches-containing proteins in a soluble state and participates in their proper delivery to the endoplasmic reticulum or alternatively can promote their sorting to the proteasome where they undergo degradation. The BAG6/BAT3 complex is involved in the post-translational delivery of tail-anchored/type II transmembrane proteins to the endoplasmic reticulum membrane. Recruited to ribosomes, it interacts with the transmembrane region of newly synthesized tail-anchored proteins and together with SGTA and ASNA1 mediates their delivery to the endoplasmic reticulum. Client proteins that cannot be properly delivered to the endoplasmic reticulum are ubiquitinated and sorted to the proteasome. Similarly, the BAG6/BAT3 complex also functions as a sorting platform for proteins of the secretory pathway that are mislocalized to the cytosol either delivering them to the proteasome for degradation or to the endoplasmic reticulum. The BAG6/BAT3 complex also plays a role in the endoplasmic reticulum-associated degradation (ERAD), a quality control mechanism that eliminates unwanted proteins of the endoplasmic reticulum through their retrotranslocation to the cytosol and their targeting to the proteasome. It maintains these retrotranslocated proteins in an unfolded yet soluble state condition in the cytosol to ensure their proper delivery to the proteasome. This Callithrix jacchus (White-tufted-ear marmoset) protein is Ubiquitin-like protein 4A (UBL4A).